Consider the following 394-residue polypeptide: Small ribosomal subunit protein uS2m (394 aa).

A mitochondrion-targeting transit peptide spans 1-25 (MQRHVFARNFRRLSLLRNPSLTKRF).

This sequence belongs to the universal ribosomal protein uS2 family. In terms of assembly, component of the mitochondrial small ribosomal subunit (mt-SSU). Mature yeast 74S mitochondrial ribosomes consist of a small (37S) and a large (54S) subunit. The 37S small subunit contains a 15S ribosomal RNA (15S mt-rRNA) and 34 different proteins. The 54S large subunit contains a 21S rRNA (21S mt-rRNA) and 46 different proteins.

It is found in the mitochondrion. Its function is as follows. Component of the mitochondrial ribosome (mitoribosome), a dedicated translation machinery responsible for the synthesis of mitochondrial genome-encoded proteins, including at least some of the essential transmembrane subunits of the mitochondrial respiratory chain. The mitoribosomes are attached to the mitochondrial inner membrane and translation products are cotranslationally integrated into the membrane. In Saccharomyces cerevisiae (strain ATCC 204508 / S288c) (Baker's yeast), this protein is Small ribosomal subunit protein uS2m (MRP4).